Consider the following 556-residue polypeptide: Urocanate hydratase (556 aa).

NAD(+)-binding positions include 52 to 53 (GG), Gln130, 176 to 178 (GMG), Glu196, Arg201, 242 to 243 (NA), 263 to 267 (QTSAH), 273 to 274 (YL), and Tyr322. Cys410 is a catalytic residue. Residue Gly492 coordinates NAD(+).

Belongs to the urocanase family. The cofactor is NAD(+).

Its subcellular location is the cytoplasm. The enzyme catalyses 4-imidazolone-5-propanoate = trans-urocanate + H2O. Its pathway is amino-acid degradation; L-histidine degradation into L-glutamate; N-formimidoyl-L-glutamate from L-histidine: step 2/3. In terms of biological role, catalyzes the conversion of urocanate to 4-imidazolone-5-propionate. This is Urocanate hydratase from Shewanella sp. (strain ANA-3).